The chain runs to 576 residues: Proline--tRNA ligase (576 aa).

It belongs to the class-II aminoacyl-tRNA synthetase family. ProS type 1 subfamily. As to quaternary structure, homodimer.

Its subcellular location is the cytoplasm. The catalysed reaction is tRNA(Pro) + L-proline + ATP = L-prolyl-tRNA(Pro) + AMP + diphosphate. Its function is as follows. Catalyzes the attachment of proline to tRNA(Pro) in a two-step reaction: proline is first activated by ATP to form Pro-AMP and then transferred to the acceptor end of tRNA(Pro). As ProRS can inadvertently accommodate and process non-cognate amino acids such as alanine and cysteine, to avoid such errors it has two additional distinct editing activities against alanine. One activity is designated as 'pretransfer' editing and involves the tRNA(Pro)-independent hydrolysis of activated Ala-AMP. The other activity is designated 'posttransfer' editing and involves deacylation of mischarged Ala-tRNA(Pro). The misacylated Cys-tRNA(Pro) is not edited by ProRS. This Leptospira interrogans serogroup Icterohaemorrhagiae serovar Lai (strain 56601) protein is Proline--tRNA ligase.